We begin with the raw amino-acid sequence, 454 residues long: Bifunctional protein GlmU (454 aa).

The interval 1–226 (MALNVVILAA…AIEVEGANNR (226 aa)) is pyrophosphorylase. UDP-N-acetyl-alpha-D-glucosamine contacts are provided by residues 8-11 (LAAG), Lys-22, Gln-73, 78-79 (GT), 100-102 (YGD), Gly-137, Glu-151, Asn-166, and Asn-224. Asp-102 lines the Mg(2+) pocket. Mg(2+) is bound at residue Asn-224. The tract at residues 227–247 (VQLAQLERAYQAREAEKLMIA) is linker. The segment at 248 to 454 (GANLRDPSRI…GWQRPVKIKE (207 aa)) is N-acetyltransferase. Residues Arg-330 and Lys-348 each coordinate UDP-N-acetyl-alpha-D-glucosamine. His-360 serves as the catalytic Proton acceptor. Tyr-363 and Asn-374 together coordinate UDP-N-acetyl-alpha-D-glucosamine. Acetyl-CoA is bound by residues Ala-377, 383–384 (NY), Ser-402, Ala-420, and Arg-437.

This sequence in the N-terminal section; belongs to the N-acetylglucosamine-1-phosphate uridyltransferase family. The protein in the C-terminal section; belongs to the transferase hexapeptide repeat family. Homotrimer. It depends on Mg(2+) as a cofactor.

It is found in the cytoplasm. The catalysed reaction is alpha-D-glucosamine 1-phosphate + acetyl-CoA = N-acetyl-alpha-D-glucosamine 1-phosphate + CoA + H(+). It catalyses the reaction N-acetyl-alpha-D-glucosamine 1-phosphate + UTP + H(+) = UDP-N-acetyl-alpha-D-glucosamine + diphosphate. It participates in nucleotide-sugar biosynthesis; UDP-N-acetyl-alpha-D-glucosamine biosynthesis; N-acetyl-alpha-D-glucosamine 1-phosphate from alpha-D-glucosamine 6-phosphate (route II): step 2/2. Its pathway is nucleotide-sugar biosynthesis; UDP-N-acetyl-alpha-D-glucosamine biosynthesis; UDP-N-acetyl-alpha-D-glucosamine from N-acetyl-alpha-D-glucosamine 1-phosphate: step 1/1. It functions in the pathway bacterial outer membrane biogenesis; LPS lipid A biosynthesis. Its function is as follows. Catalyzes the last two sequential reactions in the de novo biosynthetic pathway for UDP-N-acetylglucosamine (UDP-GlcNAc). The C-terminal domain catalyzes the transfer of acetyl group from acetyl coenzyme A to glucosamine-1-phosphate (GlcN-1-P) to produce N-acetylglucosamine-1-phosphate (GlcNAc-1-P), which is converted into UDP-GlcNAc by the transfer of uridine 5-monophosphate (from uridine 5-triphosphate), a reaction catalyzed by the N-terminal domain. The protein is Bifunctional protein GlmU of Shewanella sp. (strain MR-7).